The primary structure comprises 293 residues: Acetylglutamate kinase (293 aa).

Substrate is bound by residues 68–69, Arg90, and Asn189; that span reads GG.

It belongs to the acetylglutamate kinase family. ArgB subfamily.

It is found in the cytoplasm. The enzyme catalyses N-acetyl-L-glutamate + ATP = N-acetyl-L-glutamyl 5-phosphate + ADP. Its pathway is amino-acid biosynthesis; L-arginine biosynthesis; N(2)-acetyl-L-ornithine from L-glutamate: step 2/4. In terms of biological role, catalyzes the ATP-dependent phosphorylation of N-acetyl-L-glutamate. This chain is Acetylglutamate kinase, found in Mycolicibacterium smegmatis (strain ATCC 700084 / mc(2)155) (Mycobacterium smegmatis).